The primary structure comprises 191 residues: uncharacterized protein (191 aa).

A Fe2OG dioxygenase domain is found at 87–184 (EFDSALIFHY…RIAITFRQMG (98 aa)).

This is an uncharacterized protein from Acanthamoeba polyphaga mimivirus (APMV).